The primary structure comprises 543 residues: Nucleoside-triphosphatase ntp-1 (543 aa).

The chain crosses the membrane as a helical span at residues 40-60 (VYGFLLTCTCLLLILTIIPMS). Residue E212 is the Proton acceptor of the active site. A helical transmembrane segment spans residues 497-517 (QISNFFSFFVILIIVLAVALY).

This sequence belongs to the GDA1/CD39 NTPase family.

It is found in the golgi apparatus membrane. The catalysed reaction is a ribonucleoside 5'-triphosphate + H2O = a ribonucleoside 5'-diphosphate + phosphate + H(+). In terms of biological role, seems to be able to hydrolyze CTP, ATP and UTP. The chain is Nucleoside-triphosphatase ntp-1 from Caenorhabditis elegans.